Reading from the N-terminus, the 359-residue chain is UDP-3-O-acylglucosamine N-acyltransferase (359 aa).

Residue His-253 is the Proton acceptor of the active site.

Belongs to the transferase hexapeptide repeat family. LpxD subfamily. As to quaternary structure, homotrimer.

It catalyses the reaction a UDP-3-O-[(3R)-3-hydroxyacyl]-alpha-D-glucosamine + a (3R)-hydroxyacyl-[ACP] = a UDP-2-N,3-O-bis[(3R)-3-hydroxyacyl]-alpha-D-glucosamine + holo-[ACP] + H(+). The protein operates within bacterial outer membrane biogenesis; LPS lipid A biosynthesis. Its function is as follows. Catalyzes the N-acylation of UDP-3-O-acylglucosamine using 3-hydroxyacyl-ACP as the acyl donor. Is involved in the biosynthesis of lipid A, a phosphorylated glycolipid that anchors the lipopolysaccharide to the outer membrane of the cell. The chain is UDP-3-O-acylglucosamine N-acyltransferase from Burkholderia lata (strain ATCC 17760 / DSM 23089 / LMG 22485 / NCIMB 9086 / R18194 / 383).